The following is a 407-amino-acid chain: PWWP domain-containing protein 3 (407 aa).

The disordered stretch occupies residues 1-46 (MMVARTRSQKRKLEEINNQKKIKTKKKATGQQTSNTKNLRDVKKKG). One can recognise a PWWP domain in the interval 63–129 (NGEYVLAKMS…SSNVLPLTVD (67 aa)). Residues Ser160 and Ser162 each carry the phosphoserine modification. The disordered stretch occupies residues 163–248 (DVEEDEFEPE…PIPSPKKTAK (86 aa)). Positions 172 to 208 (ENTRKKLQKPIEKPKKEKIEATPKIDGGKRLKNEKSS) are enriched in basic and acidic residues. Residues Ser236, Ser238, and Ser242 each carry the phosphoserine modification.

As to quaternary structure, component of the mst2 complex composed of at least eaf6, mst2, nto1, pdp3, ptf1, ptf2 and tfg3.

It is found in the nucleus. Its function is as follows. Component of the mst2 complex which is a highly specific H3 lysine 14 (H3K14) acetyltransferase that functions together with gcn5 to regulate global levels of H3K14 acetylation (H3K14ac), critical for DNA damage checkpoint activation. The chain is PWWP domain-containing protein 3 (pdp3) from Schizosaccharomyces pombe (strain 972 / ATCC 24843) (Fission yeast).